We begin with the raw amino-acid sequence, 421 residues long: Testin (421 aa).

In terms of domain architecture, PET spans Met92–Asp199. Residues Glu133–Cys164 form a disordered region. Residues Pro155–Cys164 are compositionally biased toward basic and acidic residues. 3 consecutive LIM zinc-binding domains span residues Tyr234–Glu297, Pro299–Val359, and Gln362–Ser421.

The protein belongs to the prickle / espinas / testin family. In terms of assembly, interacts via LIM domain 1 with ZYX. Interacts (via LIM domain 3) with ENAH and VASP. Interacts with ALKBH4, talin, actin, alpha-actinin, GRIP1 and PXN. Interacts (via LIM domain 2) with ACTL7A (via N-terminus). Heterodimer with ACTL7A; the heterodimer interacts with ENAH to form a heterotrimer.

The protein localises to the cytoplasm. Its subcellular location is the cell junction. The protein resides in the focal adhesion. Scaffold protein that may play a role in cell adhesion, cell spreading and in the reorganization of the actin cytoskeleton. Plays a role in the regulation of cell proliferation. May act as a tumor suppressor. In Equus caballus (Horse), this protein is Testin (TES).